The sequence spans 364 residues: Chaperone protein DnaJ 1 (364 aa).

Residues 7 to 71 enclose the J domain; it reads DYYEILGVNR…ERRSEYDAIL (65 aa). The CR-type zinc-finger motif lies at 124-200; sequence GCEKEIIYSR…CYGRGRVSAQ (77 aa). Zn(2+)-binding residues include C137, C140, C154, C157, C174, C177, C188, and C191. CXXCXGXG motif repeat units follow at residues 137–144, 154–161, 174–181, and 188–195; these read CPVCEGMG, CHACNGEG, CSVCKGKG, and CPTCYGRG.

The protein belongs to the DnaJ family. In terms of assembly, homodimer. It depends on Zn(2+) as a cofactor.

The protein resides in the cytoplasm. Participates actively in the response to hyperosmotic and heat shock by preventing the aggregation of stress-denatured proteins and by disaggregating proteins, also in an autonomous, DnaK-independent fashion. Unfolded proteins bind initially to DnaJ; upon interaction with the DnaJ-bound protein, DnaK hydrolyzes its bound ATP, resulting in the formation of a stable complex. GrpE releases ADP from DnaK; ATP binding to DnaK triggers the release of the substrate protein, thus completing the reaction cycle. Several rounds of ATP-dependent interactions between DnaJ, DnaK and GrpE are required for fully efficient folding. Also involved, together with DnaK and GrpE, in the DNA replication of plasmids through activation of initiation proteins. This chain is Chaperone protein DnaJ 1, found in Aquifex aeolicus (strain VF5).